Consider the following 358-residue polypeptide: Heat-inducible transcription repressor HrcA (358 aa).

This sequence belongs to the HrcA family.

Negative regulator of class I heat shock genes (grpE-dnaK-dnaJ and groELS operons). Prevents heat-shock induction of these operons. The sequence is that of Heat-inducible transcription repressor HrcA from Caulobacter vibrioides (strain ATCC 19089 / CIP 103742 / CB 15) (Caulobacter crescentus).